A 195-amino-acid chain; its full sequence is dTTP/UTP pyrophosphatase (195 aa).

Asp73 serves as the catalytic Proton acceptor.

This sequence belongs to the Maf family. YhdE subfamily. It depends on a divalent metal cation as a cofactor.

The protein localises to the cytoplasm. The catalysed reaction is dTTP + H2O = dTMP + diphosphate + H(+). It catalyses the reaction UTP + H2O = UMP + diphosphate + H(+). Its function is as follows. Nucleoside triphosphate pyrophosphatase that hydrolyzes dTTP and UTP. May have a dual role in cell division arrest and in preventing the incorporation of modified nucleotides into cellular nucleic acids. The polypeptide is dTTP/UTP pyrophosphatase (Deinococcus radiodurans (strain ATCC 13939 / DSM 20539 / JCM 16871 / CCUG 27074 / LMG 4051 / NBRC 15346 / NCIMB 9279 / VKM B-1422 / R1)).